The following is a 245-amino-acid chain: Thiopurine S-methyltransferase (245 aa).

Residue serine 14 is modified to Phosphoserine. 29 to 40 provides a ligand contact to S-adenosyl-L-methionine; sequence WQDKWVNGKTAF. Residue phenylalanine 40 coordinates substrate. Lysine 58 carries the N6-acetyllysine modification. Residues leucine 69, glutamate 90, 134–135, and arginine 152 each bind S-adenosyl-L-methionine; that span reads SI.

Belongs to the class I-like SAM-binding methyltransferase superfamily. TPMT family. As to quaternary structure, monomer.

It localises to the cytoplasm. It catalyses the reaction S-adenosyl-L-methionine + a thiopurine = S-adenosyl-L-homocysteine + a thiopurine S-methylether.. In Gorilla gorilla gorilla (Western lowland gorilla), this protein is Thiopurine S-methyltransferase (TPMT).